The sequence spans 181 residues: Ferredoxin C 2, chloroplastic (181 aa).

Residues 1 to 44 (MALILPCTFCTSLQKKNFPINRRYITNFRRGATTATCEFRIPVE) constitute a chloroplast transit peptide. The 2Fe-2S ferredoxin-type domain maps to 59-151 (HKVTVHDRQR…DLEVETQDED (93 aa)). The [2Fe-2S] cluster site is built by C97, C102, C105, and C135.

This sequence belongs to the 2Fe2S plant-type ferredoxin family. [2Fe-2S] cluster is required as a cofactor.

The protein resides in the plastid. The protein localises to the chloroplast. Ferredoxins are iron-sulfur proteins that transfer electrons in a wide variety of metabolic reactions. Mediates alternative electron partitioning in conditions of acceptor limitation at photosystem I. The polypeptide is Ferredoxin C 2, chloroplastic (Arabidopsis thaliana (Mouse-ear cress)).